Reading from the N-terminus, the 447-residue chain is ATP-dependent protease ATPase subunit HslU (447 aa).

Residues Ile-18, Gly-60 to Glu-65, Asp-259, Glu-325, and Arg-397 contribute to the ATP site.

The protein belongs to the ClpX chaperone family. HslU subfamily. In terms of assembly, a double ring-shaped homohexamer of HslV is capped on each side by a ring-shaped HslU homohexamer. The assembly of the HslU/HslV complex is dependent on binding of ATP.

The protein resides in the cytoplasm. In terms of biological role, ATPase subunit of a proteasome-like degradation complex; this subunit has chaperone activity. The binding of ATP and its subsequent hydrolysis by HslU are essential for unfolding of protein substrates subsequently hydrolyzed by HslV. HslU recognizes the N-terminal part of its protein substrates and unfolds these before they are guided to HslV for hydrolysis. The chain is ATP-dependent protease ATPase subunit HslU from Burkholderia pseudomallei (strain 668).